A 238-amino-acid chain; its full sequence is Probable septum site-determining protein MinC (238 aa).

It belongs to the MinC family. As to quaternary structure, interacts with MinD and FtsZ.

Cell division inhibitor that blocks the formation of polar Z ring septums. Rapidly oscillates between the poles of the cell to destabilize FtsZ filaments that have formed before they mature into polar Z rings. Prevents FtsZ polymerization. In Aeromonas salmonicida (strain A449), this protein is Probable septum site-determining protein MinC.